We begin with the raw amino-acid sequence, 71 residues long: MSKDDLIQFTGTILELLPNATFRVKLENDHGIIAHTSGRMRKNRIRILLGDKVTVEMTPYDLTKGRVIHRH.

One can recognise an S1-like domain in the interval 1–71; sequence MSKDDLIQFT…LTKGRVIHRH (71 aa).

The protein belongs to the IF-1 family. In terms of assembly, component of the 30S ribosomal translation pre-initiation complex which assembles on the 30S ribosome in the order IF-2 and IF-3, IF-1 and N-formylmethionyl-tRNA(fMet); mRNA recruitment can occur at any time during PIC assembly.

The protein resides in the cytoplasm. Its function is as follows. One of the essential components for the initiation of protein synthesis. Stabilizes the binding of IF-2 and IF-3 on the 30S subunit to which N-formylmethionyl-tRNA(fMet) subsequently binds. Helps modulate mRNA selection, yielding the 30S pre-initiation complex (PIC). Upon addition of the 50S ribosomal subunit IF-1, IF-2 and IF-3 are released leaving the mature 70S translation initiation complex. This chain is Translation initiation factor IF-1, found in Rickettsia akari (strain Hartford).